The primary structure comprises 317 residues: L-lactate dehydrogenase 1 (317 aa).

Residues valine 17, aspartate 38, lysine 43, tyrosine 69, and 83–84 (GA) contribute to the NAD(+) site. Residues glutamine 86 and arginine 92 each contribute to the substrate site. Residues serine 105, 122–124 (ATN), and serine 147 each bind NAD(+). Substrate is bound at residue 124-127 (NPVD). 152–155 (DSAR) lines the substrate pocket. Histidine 179 functions as the Proton acceptor in the catalytic mechanism. Tyrosine 223 carries the phosphotyrosine modification. Threonine 232 serves as a coordination point for substrate.

Belongs to the LDH/MDH superfamily. LDH family. In terms of assembly, homotetramer.

It localises to the cytoplasm. It catalyses the reaction (S)-lactate + NAD(+) = pyruvate + NADH + H(+). It participates in fermentation; pyruvate fermentation to lactate; (S)-lactate from pyruvate: step 1/1. Catalyzes the conversion of lactate to pyruvate (Potential). Appears to be the primary factor that allows S.aureus growth during nitrosative stress in both aerobically and anaerobically cultured cells. This chain is L-lactate dehydrogenase 1, found in Staphylococcus aureus (strain MRSA252).